The primary structure comprises 293 residues: Acetylglutamate kinase (293 aa).

Residues 65 to 66 (GG), arginine 87, and asparagine 180 contribute to the substrate site.

It belongs to the acetylglutamate kinase family. ArgB subfamily.

It is found in the cytoplasm. The catalysed reaction is N-acetyl-L-glutamate + ATP = N-acetyl-L-glutamyl 5-phosphate + ADP. It participates in amino-acid biosynthesis; L-arginine biosynthesis; N(2)-acetyl-L-ornithine from L-glutamate: step 2/4. Its function is as follows. Catalyzes the ATP-dependent phosphorylation of N-acetyl-L-glutamate. In Cereibacter sphaeroides (strain ATCC 17029 / ATH 2.4.9) (Rhodobacter sphaeroides), this protein is Acetylglutamate kinase.